The primary structure comprises 807 residues: Spondin-1 (807 aa).

An N-terminal signal peptide occupies residues 1 to 28; the sequence is MRLSPVSLRLSRGPALLALALPLAAALA. The 166-residue stretch at 29–194 folds into the Reelin domain; the sequence is FSDETLDKVT…DPTLDGVTDR (166 aa). 17 cysteine pairs are disulfide-bonded: Cys-44-Cys-128, Cys-156-Cys-182, Cys-199-Cys-336, Cys-200-Cys-340, Cys-202-Cys-415, Cys-443-Cys-480, Cys-454-Cys-489, Cys-459-Cys-494, Cys-502-Cys-538, Cys-513-Cys-517, Cys-548-Cys-554, Cys-559-Cys-595, Cys-570-Cys-574, Cys-605-Cys-610, Cys-615-Cys-650, Cys-626-Cys-630, and Cys-660-Cys-665. The Spondin domain maps to 195–388; the sequence is PILDCCACGT…LTSLDHPQSP (194 aa). N-linked (GlcNAc...) asparagine glycosylation is present at Asn-214. Ca(2+) contacts are provided by Asp-325, Asp-354, and Asp-358. TSP type-1 domains follow at residues 442–495, 501–555, 558–611, 614–666, and 668–721; these read TCIY…PGCS, TCTM…EECS, SCLV…PECH, PCLL…PECP, and DCEL…RKCL. The N-linked (GlcNAc...) asparagine glycan is linked to Asn-681. Over residues 732–746 the composition is skewed to basic and acidic residues; it reads REARESRRSEQLREE. Positions 732–752 are disordered; sequence REARESRRSEQLREESDGEQF. Residues 754–806 form the TSP type-1 6 domain; sequence GCRMRPWTAWSECTKLCGGGIQERYMTVKKRFKSSQFTSCKDKKEIRACNVHP.

In terms of assembly, binds to the central extracellular domain of APP and inhibits beta-secretase cleavage of APP.

Its subcellular location is the secreted. It localises to the extracellular space. The protein localises to the extracellular matrix. In terms of biological role, cell adhesion protein that promotes the attachment of spinal cord and sensory neuron cells and the outgrowth of neurites in vitro. May contribute to the growth and guidance of axons in both the spinal cord and the PNS. The polypeptide is Spondin-1 (Spon1) (Mus musculus (Mouse)).